Reading from the N-terminus, the 232-residue chain is RNA chaperone ProQ (232 aa).

Residues 105-182 (EAKARVQAQR…REEQHTPVSD (78 aa)) form a disordered region. Over residues 117-136 (QQAKKREAAAAAGEKEDAPR) the composition is skewed to basic and acidic residues. Basic residues predominate over residues 137–146 (RERKPRPTTP). The segment covering 147 to 177 (RRKEGAERKPRAQKPVEKAPKTVKAPREEQH) has biased composition (basic and acidic residues).

Belongs to the ProQ family.

It is found in the cytoplasm. Functionally, RNA chaperone with significant RNA binding, RNA strand exchange and RNA duplexing activities. May regulate ProP activity through an RNA-based, post-transcriptional mechanism. This chain is RNA chaperone ProQ, found in Shigella flexneri serotype 5b (strain 8401).